The primary structure comprises 75 residues: Sec-independent protein translocase protein TatA (75 aa).

The helical transmembrane segment at 1–21 (MGSFSIWHWLIVLVIVLLVFG) threads the bilayer. The interval 41-75 (KGMHDDDKPAGKLGDDSRSAEQAREAQAERDRDAR) is disordered.

It belongs to the TatA/E family. As to quaternary structure, the Tat system comprises two distinct complexes: a TatABC complex, containing multiple copies of TatA, TatB and TatC subunits, and a separate TatA complex, containing only TatA subunits. Substrates initially bind to the TatABC complex, which probably triggers association of the separate TatA complex to form the active translocon.

It localises to the cell inner membrane. Part of the twin-arginine translocation (Tat) system that transports large folded proteins containing a characteristic twin-arginine motif in their signal peptide across membranes. TatA could form the protein-conducting channel of the Tat system. This Xanthomonas campestris pv. campestris (strain 8004) protein is Sec-independent protein translocase protein TatA.